Here is a 423-residue protein sequence, read N- to C-terminus: Gamma-glutamyl phosphate reductase (423 aa).

This sequence belongs to the gamma-glutamyl phosphate reductase family.

It localises to the cytoplasm. It catalyses the reaction L-glutamate 5-semialdehyde + phosphate + NADP(+) = L-glutamyl 5-phosphate + NADPH + H(+). It functions in the pathway amino-acid biosynthesis; L-proline biosynthesis; L-glutamate 5-semialdehyde from L-glutamate: step 2/2. Catalyzes the NADPH-dependent reduction of L-glutamate 5-phosphate into L-glutamate 5-semialdehyde and phosphate. The product spontaneously undergoes cyclization to form 1-pyrroline-5-carboxylate. The chain is Gamma-glutamyl phosphate reductase from Pseudomonas putida (strain W619).